Here is a 411-residue protein sequence, read N- to C-terminus: Glucose-1-phosphate adenylyltransferase (411 aa).

Alpha-D-glucose 1-phosphate-binding positions include Gly-162, 177 to 178 (EK), and Ser-195.

The protein belongs to the bacterial/plant glucose-1-phosphate adenylyltransferase family. Homotetramer.

The catalysed reaction is alpha-D-glucose 1-phosphate + ATP + H(+) = ADP-alpha-D-glucose + diphosphate. Its pathway is glycan biosynthesis; glycogen biosynthesis. Functionally, involved in the biosynthesis of ADP-glucose, a building block required for the elongation reactions to produce glycogen. Catalyzes the reaction between ATP and alpha-D-glucose 1-phosphate (G1P) to produce pyrophosphate and ADP-Glc. The sequence is that of Glucose-1-phosphate adenylyltransferase from Thermodesulfovibrio yellowstonii (strain ATCC 51303 / DSM 11347 / YP87).